We begin with the raw amino-acid sequence, 499 residues long: Inosine-5'-monophosphate dehydrogenase (499 aa).

2 CBS domains span residues 106–165 (IDRE…SDAV) and 169–225 (MTDE…GSAA). NAD(+) is bound by residues D260 and 308-310 (GIG). Residues G310 and G312 each coordinate K(+). Residue S313 coordinates IMP. K(+) is bound at residue C315. C315 functions as the Thioimidate intermediate in the catalytic mechanism. IMP-binding positions include 348-350 (DGG), 371-372 (GS), and 395-399 (YRGMG). R411 (proton acceptor) is an active-site residue. E425 contacts IMP. The K(+) site is built by E479, G480, and H481. Residues 480–499 (GHPHDVMITDEAPNYSPQGE) are disordered.

It belongs to the IMPDH/GMPR family. As to quaternary structure, homotetramer. K(+) is required as a cofactor.

The enzyme catalyses IMP + NAD(+) + H2O = XMP + NADH + H(+). The protein operates within purine metabolism; XMP biosynthesis via de novo pathway; XMP from IMP: step 1/1. Its activity is regulated as follows. Mycophenolic acid (MPA) is a non-competitive inhibitor that prevents formation of the closed enzyme conformation by binding to the same site as the amobile flap. In contrast, mizoribine monophosphate (MZP) is a competitive inhibitor that induces the closed conformation. MPA is a potent inhibitor of mammalian IMPDHs but a poor inhibitor of the bacterial enzymes. MZP is a more potent inhibitor of bacterial IMPDH. In terms of biological role, catalyzes the conversion of inosine 5'-phosphate (IMP) to xanthosine 5'-phosphate (XMP), the first committed and rate-limiting step in the de novo synthesis of guanine nucleotides, and therefore plays an important role in the regulation of cell growth. In Halobacterium salinarum (strain ATCC 700922 / JCM 11081 / NRC-1) (Halobacterium halobium), this protein is Inosine-5'-monophosphate dehydrogenase.